The chain runs to 126 residues: Protein C10 (126 aa).

A2 is subject to N-acetylalanine.

The protein belongs to the UPF0456 family. As to expression, ubiquitously expressed, with higher expression in lung.

It is found in the cytoplasm. In terms of biological role, in brain, may be required for corpus callosum development. The sequence is that of Protein C10 (Grcc10) from Mus musculus (Mouse).